Reading from the N-terminus, the 257-residue chain is Sad1-interacting factor 1 (257 aa).

The segment at 16–68 is disordered; the sequence is LNKIKQGGASRINQILGQNSDDSQSDVRATASEEAVHSETATPVTPMSSGFME. Polar residues-rich tracts occupy residues 26–37 and 54–63; these read RINQILGQNSDD and ETATPVTPMS. S35 carries the post-translational modification Phosphoserine. S132 is modified (phosphoserine). Position 134 is a phosphothreonine (T134). A run of 2 helical transmembrane segments spans residues 160–180 and 231–251; these read LLAI…LLPW and FTQL…CCYF.

Interacts with kms1 and sad1.

It is found in the membrane. The protein is Sad1-interacting factor 1 (sif1) of Schizosaccharomyces pombe (strain 972 / ATCC 24843) (Fission yeast).